Here is a 641-residue protein sequence, read N- to C-terminus: MNIRSNPETTRAAVTTGALPSSKKIYATPASAPDLRVPLREIILSEGAGEPNLPVYDTSGPYTDPTVVIDVNKGLPRPRTEWVKQRGGVEQYEGRDIKPEDNGNVGAAHAAKAFTAHHQPLRGISDAPITQYEFARRGIITKEMIYVAERENLGRKQQLERAEAALADGESFGAAVPAFITPEFVRDEIARGRAIIPANINHGELEPMIIGRNFLTKINANIGNSAVTSSVEEEVDKMVWAIRWGADTVMDLSTGRNIHTTREWILRNSPVPIGTVPIYQALEKCEGDPVKLTWELYKDTLIEQAEQGVDYFTIHAGVRLQYIHLTASRVTGIVSRGGSIMAKWCLAHHKESFLYTHFDEICDLMRKYDVSFSLGDGLRPGSIADANDRAQFAELETLGELTKIAWAKGCQVMIEGPGHVPMHKIKINMDKQLKECGEAPFYTLGPLTTDIAPGYDHITSGIGAAMIGWFGCAMLCYVTPKEHLGLPDRNDVKTGVITYKIAAHAADLAKGHPAAQLRDDALSRARFEFRWQDQFNLGLDPDTAQAFHDETLPKDAHKVAHFCSMCGPKFCSMKITQDVRDYAAGLGDNEKAALYPVGHAGMTISGTIEDGMAQMSAKFKEMGSSVYLDADKVKESNKALS.

Substrate-binding positions include Asn-221, Met-250, Tyr-279, His-315, 335 to 337 (SRG), 376 to 379 (DGLR), and Glu-415. Residue His-419 participates in Zn(2+) binding. Tyr-442 contributes to the substrate binding site. His-483 contacts Zn(2+). [4Fe-4S] cluster is bound by residues Cys-563, Cys-566, and Cys-571.

This sequence belongs to the ThiC family. As to quaternary structure, homodimer. Requires [4Fe-4S] cluster as cofactor.

It carries out the reaction 5-amino-1-(5-phospho-beta-D-ribosyl)imidazole + S-adenosyl-L-methionine = 4-amino-2-methyl-5-(phosphooxymethyl)pyrimidine + CO + 5'-deoxyadenosine + formate + L-methionine + 3 H(+). The protein operates within cofactor biosynthesis; thiamine diphosphate biosynthesis. In terms of biological role, catalyzes the synthesis of the hydroxymethylpyrimidine phosphate (HMP-P) moiety of thiamine from aminoimidazole ribotide (AIR) in a radical S-adenosyl-L-methionine (SAM)-dependent reaction. The sequence is that of Phosphomethylpyrimidine synthase from Rhodopseudomonas palustris (strain TIE-1).